Here is an 87-residue protein sequence, read N- to C-terminus: Conotoxin Bt15a (87 aa).

The signal sequence occupies residues 1-23; that stretch reads MEKLTILVLVATVLLAIQVLVQS. Positions 24–49 are excised as a propeptide; the sequence is DGEKPLKRRVKQYAAKRLSALMRGPR. Gln-50 is modified (pyrrolidone carboxylic acid).

The protein belongs to the conotoxin O2 superfamily. In terms of processing, contains 4 disulfide bonds. In terms of tissue distribution, expressed by the venom duct.

The protein localises to the secreted. This Conus betulinus (Beech cone) protein is Conotoxin Bt15a.